An 819-amino-acid polypeptide reads, in one-letter code: Protein EFR3 homolog A (819 aa).

Residues 210-230 (DTDSRTGPPASPTTGDKEENP) form a disordered region.

It belongs to the EFR3 family. As to quaternary structure, component of a phosphatidylinositol 4-kinase (PI4K) complex. In terms of processing, palmitoylated at its N-terminus, anchoring the protein to the plasma membrane.

It is found in the cell membrane. Component of a complex required to localize phosphatidylinositol 4-kinase (PI4K) to the plasma membrane. The complex acts as a regulator of phosphatidylinositol 4-phosphate (PtdIns(4)P) synthesis. In the complex, efr3a probably acts as the membrane-anchoring component. This Xenopus laevis (African clawed frog) protein is Protein EFR3 homolog A (efr3a).